Reading from the N-terminus, the 150-residue chain is Small ribosomal subunit protein uS11 (150 aa).

The protein belongs to the universal ribosomal protein uS11 family. In terms of assembly, part of the 30S ribosomal subunit. Interacts with proteins S7 and S18. Binds to IF-3.

Functionally, located on the platform of the 30S subunit, it bridges several disparate RNA helices of the 16S rRNA. Forms part of the Shine-Dalgarno cleft in the 70S ribosome. The protein is Small ribosomal subunit protein uS11 of Pelagibacter ubique (strain HTCC1062).